The primary structure comprises 533 residues: Tyrosine decarboxylase (533 aa).

The segment at 1-22 (MAPPSHCHTINGGAPRNGAIPE) is disordered. 2 residues coordinate pyridoxal 5'-phosphate: threonine 281 and asparagine 336. Lysine 339 carries the post-translational modification N6-(pyridoxal phosphate)lysine.

It belongs to the group II decarboxylase family. Pyridoxal 5'-phosphate serves as cofactor.

The enzyme catalyses L-tyrosine + H(+) = tyramine + CO2. Catalyzes the decarboxylation of L-tyrosine to tyramine, which can be converted to the hydroxycinnamic acid amides feruloyltyramine and 4-coumaroyltyramine. Possesses low tryptophan decarboxylase activity. The sequence is that of Tyrosine decarboxylase from Oryza sativa subsp. japonica (Rice).